The sequence spans 244 residues: MSDWDLGELNALEKAQQTAALAAVNQQLESQTAEQRVAWALEHLPEQAVLSSSFGIQAAVSLRLVTRQRPDIPVILTDTGYLFPETYRFIDELTETLGLNLQIFRATTSPAWQEARYGKLWEQGVEGIERYNQLNKVEPMNRALATLGAGTWFAGLRREQSGSRAHLPVLAIQRGVFKLLPIIDWDNRQVYQYLTRHGLSYHPLWEQGYLSVGDTHTTRKCEPGMSEEETRFFGLKRECGLHEG.

Catalysis depends on Cys239, which acts as the Nucleophile; cysteine thiosulfonate intermediate.

This sequence belongs to the PAPS reductase family. CysH subfamily.

Its subcellular location is the cytoplasm. The enzyme catalyses [thioredoxin]-disulfide + sulfite + adenosine 3',5'-bisphosphate + 2 H(+) = [thioredoxin]-dithiol + 3'-phosphoadenylyl sulfate. The protein operates within sulfur metabolism; hydrogen sulfide biosynthesis; sulfite from sulfate: step 3/3. Functionally, catalyzes the formation of sulfite from phosphoadenosine 5'-phosphosulfate (PAPS) using thioredoxin as an electron donor. The protein is Phosphoadenosine 5'-phosphosulfate reductase of Sodalis glossinidius (strain morsitans).